We begin with the raw amino-acid sequence, 913 residues long: Vacuolar membrane protease (913 aa).

The Cytoplasmic portion of the chain corresponds to 1–15 (MMANYFRSTFKFRKT). A helical transmembrane segment spans residues 16 to 36 (TVSTLFVLTVLVISILTWFDA). At 37–364 (NKYKSNLPDD…FFVVSARQLY (328 aa)) the chain is on the vacuolar side. Residue asparagine 117 is glycosylated (N-linked (GlcNAc...) asparagine). Positions 152 and 164 each coordinate Zn(2+). Glutamate 196 serves as the catalytic Proton acceptor. 3 residues coordinate Zn(2+): glutamate 197, glutamate 222, and histidine 296. A helical transmembrane segment spans residues 365-385 (VWNIVLLCVLPITLILLRIVC). At 386–394 (NKLGTWRMP) the chain is on the cytoplasmic side. A helical transmembrane segment spans residues 395–415 (TSALFTRIPFALFVSSFTIYF). Topologically, residues 416–431 (TKELLLQLNPTIWSRN) are vacuolar. Residues 432–452 (FILPFLFCISEFLLINTLVLA) form a helical membrane-spanning segment. The Cytoplasmic segment spans residues 453–465 (LFEYLWPIQDFKT). A helical membrane pass occupies residues 466-486 (LSLLELSAIAWLFLLKCTWDL). Residues 487-494 (SSSGFKAT) lie on the Vacuolar side of the membrane. Residues 495-515 (GVYPVTVFYLFISLASMFGLC) form a helical membrane-spanning segment. The Cytoplasmic segment spans residues 516-600 (SMCFGKRPNA…TLNYDWSAQY (85 aa)). The span at 540–552 (NDTHSIECPRQPE) shows a compositional bias: basic and acidic residues. Residues 540–578 (NDTHSIECPRQPEDSETTETSPLINTPSSSVQSSPIASS) form a disordered region. Positions 557–566 (TETSPLINTP) are enriched in polar residues. The span at 567–578 (SSSVQSSPIASS) shows a compositional bias: low complexity. A helical transmembrane segment spans residues 601–621 (LLAVPINAFLIWESLFNLFDA). Residues 622 to 634 (LSMTVQESNKATE) are Vacuolar-facing. The chain crosses the membrane as a helical span at residues 635-655 (AVFKFAIYGAIFLCSPLLPFT). Residues 656-660 (TKLNR) are Cytoplasmic-facing. A helical transmembrane segment spans residues 661 to 681 (FVVIILGVVTILAASFSLFAA). Residues 682–913 (PYTELAPLKL…MVTIHKYLEL (232 aa)) lie on the Vacuolar side of the membrane. N-linked (GlcNAc...) asparagine glycans are attached at residues asparagine 729, asparagine 794, and asparagine 810.

Belongs to the peptidase M28 family. Zn(2+) serves as cofactor.

The protein localises to the vacuole membrane. In terms of biological role, may be involved in vacuolar sorting and osmoregulation. The polypeptide is Vacuolar membrane protease (Kluyveromyces lactis (strain ATCC 8585 / CBS 2359 / DSM 70799 / NBRC 1267 / NRRL Y-1140 / WM37) (Yeast)).